A 170-amino-acid polypeptide reads, in one-letter code: Large ribosomal subunit protein uL11 (170 aa).

It belongs to the universal ribosomal protein uL11 family. Part of the ribosomal stalk of the 50S ribosomal subunit. Interacts with L10 and the large rRNA to form the base of the stalk. L10 forms an elongated spine to which L12 dimers bind in a sequential fashion forming a multimeric L10(L12)X complex.

Its function is as follows. Forms part of the ribosomal stalk which helps the ribosome interact with GTP-bound translation factors. The chain is Large ribosomal subunit protein uL11 from Saccharolobus islandicus (strain Y.N.15.51 / Yellowstone #2) (Sulfolobus islandicus).